A 270-amino-acid chain; its full sequence is UPF0354 protein BCA_4815 (270 aa).

This sequence belongs to the UPF0354 family.

In Bacillus cereus (strain 03BB102), this protein is UPF0354 protein BCA_4815.